The sequence spans 284 residues: Small ribosomal subunit protein uS5 (284 aa).

Basic and acidic residues predominate over residues 1-10 (MMADEKKTPE). The segment at 1–105 (MMADEKKTPE…DNRRGGRREE (105 aa)) is disordered. Low complexity predominate over residues 14–23 (ETATPAVAVE). A compositionally biased stretch (basic and acidic residues) spans 24–43 (DALKAEPTETLEAQKAKAEA). A compositionally biased stretch (low complexity) spans 44–67 (ETPAVAETPSEAAANQSAAQGAEG). The segment covering 68-105 (QPRERGGHDRGGRGGRGGNDRGRGRGGRDNRRGGRREE) has biased composition (basic and acidic residues). In terms of domain architecture, S5 DRBM spans 110–173 (IIEKLVHINR…AAARKKMIRV (64 aa)). A disordered region spans residues 246 to 284 (DQTSPKSVAQRRGKKVADLLGRGGASEAEAEADAAAIAE).

Belongs to the universal ribosomal protein uS5 family. In terms of assembly, part of the 30S ribosomal subunit. Contacts proteins S4 and S8.

Functionally, with S4 and S12 plays an important role in translational accuracy. Its function is as follows. Located at the back of the 30S subunit body where it stabilizes the conformation of the head with respect to the body. This Erythrobacter litoralis (strain HTCC2594) protein is Small ribosomal subunit protein uS5.